Here is a 161-residue protein sequence, read N- to C-terminus: Putative pre-16S rRNA nuclease (161 aa).

The protein belongs to the YqgF nuclease family.

Its subcellular location is the cytoplasm. In terms of biological role, could be a nuclease involved in processing of the 5'-end of pre-16S rRNA. In Bradyrhizobium sp. (strain ORS 278), this protein is Putative pre-16S rRNA nuclease.